Consider the following 483-residue polypeptide: 6-phosphogluconate dehydrogenase, decarboxylating (483 aa).

NADP(+) contacts are provided by residues 10 to 15 and 33 to 35; these read GLAVMG and NRT. Position 38 is an N6-acetyllysine (lysine 38). The residue at position 57 (serine 57) is a Phosphoserine. Position 59 is an N6-acetyllysine (lysine 59). NADP(+) is bound by residues 75 to 77 and asparagine 103; that span reads VKA. Residues asparagine 103 and 129–131 each bind substrate; that span reads SGG. The residue at position 129 (serine 129) is a Phosphoserine. Lysine 184 functions as the Proton acceptor in the catalytic mechanism. Residue 187 to 188 coordinates substrate; sequence HN. Glutamate 191 functions as the Proton donor in the catalytic mechanism. Substrate is bound by residues tyrosine 192, lysine 261, and arginine 288. Lysine 309 bears the N6-acetyllysine mark. Positions 447 and 453 each coordinate substrate. Residue 478–481 participates in NADP(+) binding; it reads SSSY.

Belongs to the 6-phosphogluconate dehydrogenase family. As to quaternary structure, homodimer.

Its subcellular location is the cytoplasm. It carries out the reaction 6-phospho-D-gluconate + NADP(+) = D-ribulose 5-phosphate + CO2 + NADPH. It functions in the pathway carbohydrate degradation; pentose phosphate pathway; D-ribulose 5-phosphate from D-glucose 6-phosphate (oxidative stage): step 3/3. Catalyzes the oxidative decarboxylation of 6-phosphogluconate to ribulose 5-phosphate and CO(2), with concomitant reduction of NADP to NADPH. The sequence is that of 6-phosphogluconate dehydrogenase, decarboxylating (PGD) from Homo sapiens (Human).